The following is a 316-amino-acid chain: D-alanine--D-alanine ligase (316 aa).

One can recognise an ATP-grasp domain in the interval 104-303; that stretch reads KRVWLQHGLP…YADLCVAILA (200 aa). Residue 130–185 coordinates ATP; it reads PDRLGLPLILKPPHEGSTVGITKVAGYSDMKAAYELAARFDAEVLAEQFITGRELT. The Mg(2+) site is built by Asp-257, Glu-270, and Asn-272.

This sequence belongs to the D-alanine--D-alanine ligase family. Mg(2+) is required as a cofactor. The cofactor is Mn(2+).

The protein localises to the cytoplasm. It catalyses the reaction 2 D-alanine + ATP = D-alanyl-D-alanine + ADP + phosphate + H(+). It functions in the pathway cell wall biogenesis; peptidoglycan biosynthesis. In terms of biological role, cell wall formation. This Bordetella parapertussis (strain 12822 / ATCC BAA-587 / NCTC 13253) protein is D-alanine--D-alanine ligase.